Consider the following 330-residue polypeptide: MFSVVLGAAVAFFVTVTLGSSFIRFLQTRKFGQYVREEGPETHLIKAGTPTMGGVLMLMGLVAGLAVVARPNPATFSVLLIVAATAGVGLYDDWQKVSKRHSEGLSARYKFLLLSLVVVLADVMALRYVGVTQNVIVPGFSNNLVLGPGVVGVGLFSVLMLFVIVGTTNAVNLTDGLDGLAAGAGGIALLTYTAIAFLERQYDLAIICGAMVGAIIGFLWYNSHPAEIFMGDTGSLAIGGVLSAAAILTKTEMLLPVIGGLFVIVALSVMIQVVVFKLTRRRVFKMAPIHHHFEMLGWAENKVVVRFWIVQSAFSALGFLMYYFFLYSSV.

Helical transmembrane passes span 3–23, 49–69, 71–91, 111–131, 145–165, 179–199, 204–224, 228–248, 256–276, and 307–327; these read SVVL…SSFI, TPTM…AVVA, PNPA…VGLY, FLLL…YVGV, VLGP…FVIV, GLAA…AFLE, LAII…YNSH, IFMG…AAIL, PVIG…VVVF, and FWIV…FFLY.

Belongs to the glycosyltransferase 4 family. MraY subfamily. Mg(2+) serves as cofactor.

The protein localises to the cell membrane. The catalysed reaction is UDP-N-acetyl-alpha-D-muramoyl-L-alanyl-gamma-D-glutamyl-meso-2,6-diaminopimeloyl-D-alanyl-D-alanine + di-trans,octa-cis-undecaprenyl phosphate = di-trans,octa-cis-undecaprenyl diphospho-N-acetyl-alpha-D-muramoyl-L-alanyl-D-glutamyl-meso-2,6-diaminopimeloyl-D-alanyl-D-alanine + UMP. The protein operates within cell wall biogenesis; peptidoglycan biosynthesis. In terms of biological role, catalyzes the initial step of the lipid cycle reactions in the biosynthesis of the cell wall peptidoglycan: transfers peptidoglycan precursor phospho-MurNAc-pentapeptide from UDP-MurNAc-pentapeptide onto the lipid carrier undecaprenyl phosphate, yielding undecaprenyl-pyrophosphoryl-MurNAc-pentapeptide, known as lipid I. This Rubrobacter xylanophilus (strain DSM 9941 / JCM 11954 / NBRC 16129 / PRD-1) protein is Phospho-N-acetylmuramoyl-pentapeptide-transferase.